Consider the following 141-residue polypeptide: HTH-type transcriptional regulator ZntR (141 aa).

The HTH merR-type domain occupies 1-70 (MYRIGELAKM…LESIRELLSI (70 aa)). The H-T-H motif DNA-binding region spans 4–23 (IGELAKMAEVTPDTIRYYEK). Zn(2+) is bound by residues Cys-114, Cys-115, His-119, and Cys-124.

As to quaternary structure, homodimer.

Its function is as follows. Zinc-responsive transcriptional regulator of zntA. This Escherichia coli O157:H7 protein is HTH-type transcriptional regulator ZntR (zntR).